We begin with the raw amino-acid sequence, 226 residues long: 3-dehydroquinate dehydratase (226 aa).

3-dehydroquinate contacts are provided by residues Ser-21, 42 to 44 (EVR), and Arg-70. His-124 (proton donor/acceptor) is an active-site residue. The active-site Schiff-base intermediate with substrate is Lys-149. 3-dehydroquinate is bound by residues Arg-187, Thr-206, and Gln-210.

The protein belongs to the type-I 3-dehydroquinase family. In terms of assembly, homodimer.

The enzyme catalyses 3-dehydroquinate = 3-dehydroshikimate + H2O. Its pathway is metabolic intermediate biosynthesis; chorismate biosynthesis; chorismate from D-erythrose 4-phosphate and phosphoenolpyruvate: step 3/7. Its function is as follows. Involved in the third step of the chorismate pathway, which leads to the biosynthesis of aromatic amino acids. Catalyzes the cis-dehydration of 3-dehydroquinate (DHQ) and introduces the first double bond of the aromatic ring to yield 3-dehydroshikimate. The chain is 3-dehydroquinate dehydratase from Methanothrix thermoacetophila (strain DSM 6194 / JCM 14653 / NBRC 101360 / PT) (Methanosaeta thermophila).